Reading from the N-terminus, the 139-residue chain is uncharacterized protein (139 aa).

In terms of domain architecture, HTH asnC-type spans Met-1 to His-62. Positions Met-20–Arg-39 form a DNA-binding region, H-T-H motif.

This is an uncharacterized protein from Bacillus subtilis (strain 168).